The chain runs to 140 residues: uncharacterized protein (140 aa).

This is an uncharacterized protein from Mycoplasma pneumoniae (strain ATCC 29342 / M129 / Subtype 1) (Mycoplasmoides pneumoniae).